The following is a 91-amino-acid chain: Cytoplasmic envelopment protein 3 (91 aa).

A lipid anchor (N-myristoyl glycine; by host) is attached at glycine 2. Residues 48–81 (NMGTDEYDEEDEGGDGGEGREPQPEVKTTPYPKR) form a disordered region. The segment covering 52–62 (DEYDEEDEGGD) has biased composition (acidic residues).

It belongs to the herpesviridae cytoplasmic envelopment protein 3 family. As to quaternary structure, interacts with cytoplasmic envelopment protein 2; this interaction is essential for the proper localization of each protein to the assembly complex and thus for the production of infectious virus. In terms of processing, myristoylation and palmitoylation (probably on one or more of the nearby cysteines at the N-terminus) enable membrane-binding and Golgi apparatus-specific targeting and are essential for efficient packaging. Post-translationally, phosphorylated. Phosphorylation does not seem to be required for recycling to the host Golgi apparatus. Packaging is selective for underphosphorylated forms.

The protein localises to the virion tegument. The protein resides in the virion membrane. It localises to the host cell membrane. It is found in the host Golgi apparatus membrane. Its function is as follows. Plays an important role in the cytoplasmic envelopment of tegument proteins and capsids during the assembly and egress processes. Also participates in viral entry at the fusion step probably by regulating the core fusion machinery. This is Cytoplasmic envelopment protein 3 (38) from Equus caballus (Horse).